A 296-amino-acid polypeptide reads, in one-letter code: Light-independent protochlorophyllide reductase iron-sulfur ATP-binding protein (296 aa).

ATP-binding positions include Gly-39–Thr-44 and Lys-68. Ser-43 contacts Mg(2+). Cys-124 and Cys-158 together coordinate [4Fe-4S] cluster. Residue Asn-209 to Arg-210 participates in ATP binding.

This sequence belongs to the NifH/BchL/ChlL family. Homodimer. Protochlorophyllide reductase is composed of three subunits; ChlL, ChlN and ChlB. Requires [4Fe-4S] cluster as cofactor.

It catalyses the reaction chlorophyllide a + oxidized 2[4Fe-4S]-[ferredoxin] + 2 ADP + 2 phosphate = protochlorophyllide a + reduced 2[4Fe-4S]-[ferredoxin] + 2 ATP + 2 H2O. It functions in the pathway porphyrin-containing compound metabolism; chlorophyll biosynthesis (light-independent). Functionally, component of the dark-operative protochlorophyllide reductase (DPOR) that uses Mg-ATP and reduced ferredoxin to reduce ring D of protochlorophyllide (Pchlide) to form chlorophyllide a (Chlide). This reaction is light-independent. The L component serves as a unique electron donor to the NB-component of the complex, and binds Mg-ATP. This Prochlorococcus marinus (strain SARG / CCMP1375 / SS120) protein is Light-independent protochlorophyllide reductase iron-sulfur ATP-binding protein.